A 670-amino-acid chain; its full sequence is MEEFRRAYAKLCAAPQEAVLRRLRERGEAPGRARLDLAEQSLSLETCGALGRLLPGAAHFAEVALGDCGLSEDGVKLLLHGLCSNSTVKSLDLKGNNLRTTGAEALGKLLRQNKSIRSLILEWNSLGVWEEGFSFFCQGLGANNFLQRLDLRNNQINHHGAGELAMALKRNASLQELDLRWNNIGLLGGRALLNCLQSNKTLKKLELAGNNVPSDILKAVEQAMDHNRDRQTILSETQNRTSVLSKEILNLKDEKTKQFLDLMDTIDKQREEIARSGRISAGRVSQLQEALNEQHSIMNSLKAKLQMTEAALALSEQKVHNLGELLSATKQEQASMAERHFAELQQQKQEGADREGKLFRDLSASNEKNLFLRNQVDELEKKCKVQQDQIFQLKQDLTNTTAELKLRAVQAEERLEMEKRRFKQSLEDMESLRLKEVDHLTQHMEASERSMQDRVQRLEAIRIALEEELSQVKAAALTERGHAEEELIKVRNQARLEEQQRVEHLEEKLRLMTEARDEAQNCCLKQKQMVGEAQVKANQLNLHADGLRRRIEELQQDLNSKEQEKVTEVNKVKVELQEQIGHLQAERTAQEGLREKIAALERQLKVLSSNHREALLDKEGEISMLMEKLRMKEADISRMKEEEAQRASILQNAIMAYVQGSSLGTHSLRK.

LRR repeat units lie at residues 87–108, 115–136, 145–166, 173–194, and 201–223; these read TVKSLDLKGNNLRTTGAEALGK, SIRSLILEWNSLGVWEEGFSFF, FLQRLDLRNNQINHHGAGELAM, SLQELDLRWNNIGLLGGRALLN, and TLKKLELAGNNVPSDILKAVEQA. Residues 234–645 are a coiled coil; that stretch reads LSETQNRTSV…ISRMKEEEAQ (412 aa).

As to quaternary structure, homomer.

It is found in the cytoplasm. The protein localises to the cytoskeleton. Its subcellular location is the microtubule organizing center. The protein resides in the centrosome. Functionally, component of the proteinaceous fiber-like linker between two centrioles, required for centrosome cohesion. In Gallus gallus (Chicken), this protein is Leucine-rich repeat-containing protein 45 (LRRC45).